A 450-amino-acid chain; its full sequence is Deoxyguanosinetriphosphate triphosphohydrolase-like protein (450 aa).

One can recognise an HD domain in the interval 61–201; that stretch reads RLTHSLEVAQ…AKLAPELNAD (141 aa).

This sequence belongs to the dGTPase family. Type 2 subfamily.

In Pasteurella multocida (strain Pm70), this protein is Deoxyguanosinetriphosphate triphosphohydrolase-like protein.